A 446-amino-acid polypeptide reads, in one-letter code: Glutamyl-tRNA reductase (446 aa).

Substrate is bound by residues 49–52, Ser-109, 114–116, and Gln-120; these read TCNR and ETQ. Cys-50 acts as the Nucleophile in catalysis. 189 to 194 is an NADP(+) binding site; it reads GAGEMA.

Belongs to the glutamyl-tRNA reductase family. Homodimer.

The catalysed reaction is (S)-4-amino-5-oxopentanoate + tRNA(Glu) + NADP(+) = L-glutamyl-tRNA(Glu) + NADPH + H(+). Its pathway is porphyrin-containing compound metabolism; protoporphyrin-IX biosynthesis; 5-aminolevulinate from L-glutamyl-tRNA(Glu): step 1/2. Its function is as follows. Catalyzes the NADPH-dependent reduction of glutamyl-tRNA(Glu) to glutamate 1-semialdehyde (GSA). The protein is Glutamyl-tRNA reductase of Macrococcus caseolyticus (strain JCSC5402) (Macrococcoides caseolyticum).